The sequence spans 119 residues: MSAIPLNRILPLGFLFHLLIFSFISLSSCMEFVEDPNNQGRISLQQRLGNQWAVGHLMGKKSLQDTDFEEMESFAKRNVENMRAALLQEQNRAESERELRHAQLVVRNILEQYLKNMQN.

The signal sequence occupies residues Met-1–Cys-29. A propeptide spanning residues Met-30–Leu-44 is cleaved from the precursor. Met-58 carries the methionine amide modification. Positions Ser-62–Asn-119 are excised as a propeptide.

Belongs to the bombesin/neuromedin-B/ranatensin family. Localized to the cutaneous granular glands in the skin and the brain.

The protein resides in the secreted. In terms of biological role, stimulates smooth muscle contraction. Role in induction of hypothermia, stimulation of DNA replication and release of many gastrointestinal hormones. The sequence is that of Bombesin from Bombina orientalis (Oriental fire-bellied toad).